A 59-amino-acid chain; its full sequence is UPF0391 membrane protein GbCGDNIH1_2123 (59 aa).

2 helical membrane-spanning segments follow: residues 6 to 26 and 35 to 55; these read LALFFLVVSLIAGLFGFTGIS and ILFVIFLIVFVVLLVMALAAG.

The protein belongs to the UPF0391 family.

It is found in the cell membrane. In Granulibacter bethesdensis (strain ATCC BAA-1260 / CGDNIH1), this protein is UPF0391 membrane protein GbCGDNIH1_2123.